The sequence spans 78 residues: MDDLFKKIQQLIAAKLEIDEDKVTLDSSFRQDLGADSLDTYELVYALEEDMGIKIPDEKANEFETVRDAYEFIKSQQK.

Positions 2–77 constitute a Carrier domain; the sequence is DDLFKKIQQL…DAYEFIKSQQ (76 aa). Ser37 is modified (O-(pantetheine 4'-phosphoryl)serine).

The protein belongs to the acyl carrier protein (ACP) family. Post-translationally, 4'-phosphopantetheine is transferred from CoA to a specific serine of apo-ACP by AcpS. This modification is essential for activity because fatty acids are bound in thioester linkage to the sulfhydryl of the prosthetic group.

The protein localises to the cytoplasm. It functions in the pathway lipid metabolism; fatty acid biosynthesis. Its function is as follows. Carrier of the growing fatty acid chain in fatty acid biosynthesis. The sequence is that of Acyl carrier protein from Treponema denticola (strain ATCC 35405 / DSM 14222 / CIP 103919 / JCM 8153 / KCTC 15104).